The sequence spans 97 residues: Mapk-regulated corepressor-interacting protein 1 (97 aa).

Disordered regions lie at residues 1–29 (MTSS…NEIF) and 72–97 (SNSL…PKKS). Residues 17–28 (ASNTRSPSSNEI) are compositionally biased toward polar residues. Positions 82–97 (DLNDLKRRTVQDPKKS) are enriched in basic and acidic residues.

The protein belongs to the MCRIP family.

Its subcellular location is the nucleus. It is found in the cytoplasm. The protein localises to the stress granule. Its function is as follows. May play a role in the regulation of the epithelial-mesenchymal transition. This Xenopus tropicalis (Western clawed frog) protein is Mapk-regulated corepressor-interacting protein 1 (Mcrip1).